The sequence spans 349 residues: MHQSLTQQRSSDMSLPDSMGAFNRRKRNSIYVTVTLLIVSVLILTVGLAATTRTQNVTVGGYYPGVILGFGSFLGIIGSNLIENKRQMLVASIVFISFGVIAAFCCAIVDGVFAARHIDLKPLYANRCHYVPKTSQKEAEEVISSSTKNSPSTRVMRNLTQAAREVNCPHLSREFCTPRIRGNTCFCCDLYNCGNRVEITGGYYEYIDVSSCQDIIHLYHLLWSATILNIVGLFLGIITAAVLGGFKDMNPTLPALNCSVENTHPTVSYYAHPQVASYNTYYHSPPHLPPYSAYDFQHSGVFPSSPPSGLSDEPQSASPSPSYMWSSSAPPRYSPPYYPPFEKPPPYSP.

Transmembrane regions (helical) follow at residues 30 to 50, 57 to 77, 89 to 109, and 226 to 246; these read IYVT…GLAA, VTVG…LGII, LVAS…CAIV, and TILN…LGGF. The segment at 303-329 is disordered; the sequence is PSSPPSGLSDEPQSASPSPSYMWSSSA. Residues 316–329 are compositionally biased toward low complexity; it reads SASPSPSYMWSSSA.

It belongs to the TMEM255 family.

It localises to the membrane. The sequence is that of Transmembrane protein 255A (TMEM255A) from Homo sapiens (Human).